The primary structure comprises 513 residues: tRNA A64-2'-O-ribosylphosphate transferase (513 aa).

In terms of biological role, tRNA backbone modifying enzyme that mediates initiator/ elongator tRNA discrimination. This enzyme modifies exclusively the initiator tRNA in position 64 using 5'-phosphoribosyl-1'-pyrophosphate as the modification donor. Recognize the stem-loop IV region that is unique in eukaryotic cytoplasmic initiator tRNAs. The polypeptide is tRNA A64-2'-O-ribosylphosphate transferase (RIT1) (Saccharomyces cerevisiae (strain ATCC 204508 / S288c) (Baker's yeast)).